Consider the following 255-residue polypeptide: UPF0246 protein Cphy_1568 (255 aa).

The protein belongs to the UPF0246 family.

The chain is UPF0246 protein Cphy_1568 from Lachnoclostridium phytofermentans (strain ATCC 700394 / DSM 18823 / ISDg) (Clostridium phytofermentans).